The sequence spans 711 residues: DNA topoisomerase 3 (711 aa).

The 134-residue stretch at 2–135 (KSLILAEKPS…LRRLWISSVT (134 aa)) folds into the Toprim domain. Residues glutamate 8 and aspartate 104 each contribute to the Mg(2+) site. Positions 152 to 580 (YNDLYYAALA…EMKDFTKDVV (429 aa)) constitute a Topo IA-type catalytic domain. The segment at 186–191 (SLGRVQ) is interaction with DNA. Residue tyrosine 305 is the O-(5'-phospho-DNA)-tyrosine intermediate of the active site. The segment at 691-711 (MNKNEGLDNNPFKDALKNLNL) is disordered.

Belongs to the type IA topoisomerase family. Mg(2+) is required as a cofactor.

The enzyme catalyses ATP-independent breakage of single-stranded DNA, followed by passage and rejoining.. Its function is as follows. Releases the supercoiling and torsional tension of DNA, which is introduced during the DNA replication and transcription, by transiently cleaving and rejoining one strand of the DNA duplex. Introduces a single-strand break via transesterification at a target site in duplex DNA. The scissile phosphodiester is attacked by the catalytic tyrosine of the enzyme, resulting in the formation of a DNA-(5'-phosphotyrosyl)-enzyme intermediate and the expulsion of a 3'-OH DNA strand. The free DNA strand then undergoes passage around the unbroken strand, thus removing DNA supercoils. Finally, in the religation step, the DNA 3'-OH attacks the covalent intermediate to expel the active-site tyrosine and restore the DNA phosphodiester backbone. The polypeptide is DNA topoisomerase 3 (Staphylococcus aureus (strain MRSA252)).